The following is a 298-amino-acid chain: Probable 2-(5''-triphosphoribosyl)-3'-dephosphocoenzyme-A synthase 2 (298 aa).

This sequence belongs to the CitG/MdcB family.

The enzyme catalyses 3'-dephospho-CoA + ATP = 2'-(5''-triphospho-alpha-D-ribosyl)-3'-dephospho-CoA + adenine. This is Probable 2-(5''-triphosphoribosyl)-3'-dephosphocoenzyme-A synthase 2 from Salmonella choleraesuis (strain SC-B67).